A 406-amino-acid polypeptide reads, in one-letter code: Arginine biosynthesis bifunctional protein ArgJ (406 aa).

T154, K180, T191, E278, N401, and T406 together coordinate substrate. T191 serves as the catalytic Nucleophile.

The protein belongs to the ArgJ family. Heterotetramer of two alpha and two beta chains.

The protein resides in the cytoplasm. The catalysed reaction is N(2)-acetyl-L-ornithine + L-glutamate = N-acetyl-L-glutamate + L-ornithine. It carries out the reaction L-glutamate + acetyl-CoA = N-acetyl-L-glutamate + CoA + H(+). The protein operates within amino-acid biosynthesis; L-arginine biosynthesis; L-ornithine and N-acetyl-L-glutamate from L-glutamate and N(2)-acetyl-L-ornithine (cyclic): step 1/1. Its pathway is amino-acid biosynthesis; L-arginine biosynthesis; N(2)-acetyl-L-ornithine from L-glutamate: step 1/4. Catalyzes two activities which are involved in the cyclic version of arginine biosynthesis: the synthesis of N-acetylglutamate from glutamate and acetyl-CoA as the acetyl donor, and of ornithine by transacetylation between N(2)-acetylornithine and glutamate. This chain is Arginine biosynthesis bifunctional protein ArgJ, found in Gloeobacter violaceus (strain ATCC 29082 / PCC 7421).